A 378-amino-acid polypeptide reads, in one-letter code: Queuine tRNA-ribosyltransferase (378 aa).

The active-site Proton acceptor is aspartate 91. Substrate-binding positions include 91-95, aspartate 145, glutamine 189, and glycine 216; that span reads DSGGF. An RNA binding region spans residues 247-253; the sequence is GVGKPED. The active-site Nucleophile is aspartate 266. Positions 271 to 275 are RNA binding; important for wobble base 34 recognition; it reads TRNAR. Zn(2+) contacts are provided by cysteine 304, cysteine 306, cysteine 309, and histidine 335.

Belongs to the queuine tRNA-ribosyltransferase family. As to quaternary structure, homodimer. Within each dimer, one monomer is responsible for RNA recognition and catalysis, while the other monomer binds to the replacement base PreQ1. The cofactor is Zn(2+).

It carries out the reaction 7-aminomethyl-7-carbaguanine + guanosine(34) in tRNA = 7-aminomethyl-7-carbaguanosine(34) in tRNA + guanine. The protein operates within tRNA modification; tRNA-queuosine biosynthesis. In terms of biological role, catalyzes the base-exchange of a guanine (G) residue with the queuine precursor 7-aminomethyl-7-deazaguanine (PreQ1) at position 34 (anticodon wobble position) in tRNAs with GU(N) anticodons (tRNA-Asp, -Asn, -His and -Tyr). Catalysis occurs through a double-displacement mechanism. The nucleophile active site attacks the C1' of nucleotide 34 to detach the guanine base from the RNA, forming a covalent enzyme-RNA intermediate. The proton acceptor active site deprotonates the incoming PreQ1, allowing a nucleophilic attack on the C1' of the ribose to form the product. After dissociation, two additional enzymatic reactions on the tRNA convert PreQ1 to queuine (Q), resulting in the hypermodified nucleoside queuosine (7-(((4,5-cis-dihydroxy-2-cyclopenten-1-yl)amino)methyl)-7-deazaguanosine). In Vibrio vulnificus (strain CMCP6), this protein is Queuine tRNA-ribosyltransferase.